The primary structure comprises 141 residues: Putative pre-16S rRNA nuclease (141 aa).

This sequence belongs to the YqgF nuclease family.

The protein resides in the cytoplasm. In terms of biological role, could be a nuclease involved in processing of the 5'-end of pre-16S rRNA. The chain is Putative pre-16S rRNA nuclease from Acetivibrio thermocellus (strain ATCC 27405 / DSM 1237 / JCM 9322 / NBRC 103400 / NCIMB 10682 / NRRL B-4536 / VPI 7372) (Clostridium thermocellum).